A 90-amino-acid chain; its full sequence is Small ribosomal subunit protein uS17 (90 aa).

This sequence belongs to the universal ribosomal protein uS17 family. In terms of assembly, part of the 30S ribosomal subunit.

Its function is as follows. One of the primary rRNA binding proteins, it binds specifically to the 5'-end of 16S ribosomal RNA. The sequence is that of Small ribosomal subunit protein uS17 from Burkholderia mallei (strain NCTC 10247).